A 260-amino-acid chain; its full sequence is Small ribosomal subunit protein uS2 (260 aa).

The protein belongs to the universal ribosomal protein uS2 family.

In Streptococcus sanguinis (strain SK36), this protein is Small ribosomal subunit protein uS2.